The chain runs to 605 residues: FAD-linked oxidoreductase easE (605 aa).

The signal sequence occupies residues Met-1–Ser-20. N-linked (GlcNAc...) asparagine glycans are attached at residues Asn-46 and Asn-105. One can recognise an FAD-binding PCMH-type domain in the interval Cys-122–Asp-307. Asn-370 is a glycosylation site (N-linked (GlcNAc...) asparagine).

This sequence belongs to the oxygen-dependent FAD-linked oxidoreductase family. FAD serves as cofactor.

It participates in alkaloid biosynthesis; ergot alkaloid biosynthesis. Its function is as follows. FAD-linked oxidoreductase; part of the gene cluster that mediates the biosynthesis of fungal ergot alkaloid ergovaline, the predominant ergopeptine product in E.festucae var. lolii. DmaW catalyzes the first step of ergot alkaloid biosynthesis by condensing dimethylallyl diphosphate (DMAP) and tryptophan to form 4-dimethylallyl-L-tryptophan. The second step is catalyzed by the methyltransferase easF that methylates 4-dimethylallyl-L-tryptophan in the presence of S-adenosyl-L-methionine, resulting in the formation of 4-dimethylallyl-L-abrine. The catalase easC and the FAD-dependent oxidoreductase easE then transform 4-dimethylallyl-L-abrine to chanoclavine-I which is further oxidized by easD in the presence of NAD(+), resulting in the formation of chanoclavine-I aldehyde. Agroclavine dehydrogenase easG then mediates the conversion of chanoclavine-I aldehyde to agroclavine via a non-enzymatic adduct reaction: the substrate is an iminium intermediate that is formed spontaneously from chanoclavine-I aldehyde in the presence of glutathione. The presence of easA is not required to complete this reaction. Further conversion of agroclavine to paspalic acid is a two-step process involving oxidation of agroclavine to elymoclavine and of elymoclavine to paspalic acid, the second step being performed by the elymoclavine oxidase cloA. Paspalic acid is then further converted to D-lysergic acid. Ergovaline is assembled from D-lysergic acid and three different amino acids by the D-lysergyl-peptide-synthetase composed of a monomudular (lpsB) and a trimodular (lpsA) nonribosomal peptide synthetase subunit. This is FAD-linked oxidoreductase easE from Epichloe festucae var. lolii (Neotyphodium lolii).